Consider the following 351-residue polypeptide: Transcription factor bHLH93 (351 aa).

The bHLH domain maps to 174–223 (GQPSKNLMAERRRRKRLNDRLSMLRSIVPKISKMDRTSILGDAIDYMKEL).

In terms of assembly, homodimer. Interacts with FAMA. Broadly expressed.

Its subcellular location is the nucleus. Functionally, transcription factor. May be involved in the differentiation of stomatal guard cells. This is Transcription factor bHLH93 (BHLH93) from Arabidopsis thaliana (Mouse-ear cress).